The chain runs to 94 residues: Cell division topological specificity factor (94 aa).

It belongs to the MinE family.

In terms of biological role, prevents the cell division inhibition by proteins MinC and MinD at internal division sites while permitting inhibition at polar sites. This ensures cell division at the proper site by restricting the formation of a division septum at the midpoint of the long axis of the cell. This is Cell division topological specificity factor from Alkalilimnicola ehrlichii (strain ATCC BAA-1101 / DSM 17681 / MLHE-1).